We begin with the raw amino-acid sequence, 214 residues long: MLITFEGIDGAGKSTQIQKLAAYLKQEGREVLTLREPGGTEVAEKIRHILLESRHDITPVGELLLFSASRAELVSEVVRPALAEGKTVILDRFFDSTTAYQGYGRGLDLNMLRTLIAISTGALTPDITFYLDILPEEALIRKFSEKSLPLAFENEELDRMERSGLEFYRNVRQGYLDIIEAEPGRFKSINARHGVQEIHAIIVKTLNERFKEQS.

7–14 contributes to the ATP binding site; sequence GIDGAGKS.

It belongs to the thymidylate kinase family.

The enzyme catalyses dTMP + ATP = dTDP + ADP. Functionally, phosphorylation of dTMP to form dTDP in both de novo and salvage pathways of dTTP synthesis. This Chlorobium luteolum (strain DSM 273 / BCRC 81028 / 2530) (Pelodictyon luteolum) protein is Thymidylate kinase.